Consider the following 620-residue polypeptide: Chaperone protein DnaK (620 aa).

Threonine 197 carries the post-translational modification Phosphothreonine; by autocatalysis. A disordered region spans residues 597-620; sequence AMANKNNAEQPKKKDDDVIDAEVE.

It belongs to the heat shock protein 70 family.

Acts as a chaperone. In Helicobacter acinonychis (strain Sheeba), this protein is Chaperone protein DnaK.